A 429-amino-acid polypeptide reads, in one-letter code: Ribosomal RNA small subunit methyltransferase B (429 aa).

Residues 254 to 260 (CAAPGGK), Asp277, Asp303, and Asp322 contribute to the S-adenosyl-L-methionine site. Residue Cys375 is the Nucleophile of the active site.

This sequence belongs to the class I-like SAM-binding methyltransferase superfamily. RsmB/NOP family.

It localises to the cytoplasm. It carries out the reaction cytidine(967) in 16S rRNA + S-adenosyl-L-methionine = 5-methylcytidine(967) in 16S rRNA + S-adenosyl-L-homocysteine + H(+). Functionally, specifically methylates the cytosine at position 967 (m5C967) of 16S rRNA. This is Ribosomal RNA small subunit methyltransferase B from Escherichia coli O17:K52:H18 (strain UMN026 / ExPEC).